Consider the following 251-residue polypeptide: ATP synthase subunit a (251 aa).

Transmembrane regions (helical) follow at residues Phe28–Leu48, Leu63–Gly80, Phe86–Phe106, His115–Leu135, Ala154–Ile176, Phe195–Met215, and Val219–Leu239.

The protein belongs to the ATPase A chain family. F-type ATPases have 2 components, CF(1) - the catalytic core - and CF(0) - the membrane proton channel. CF(1) has five subunits: alpha(3), beta(3), gamma(1), delta(1), epsilon(1). CF(0) has three main subunits: a(1), b(2) and c(9-12). The alpha and beta chains form an alternating ring which encloses part of the gamma chain. CF(1) is attached to CF(0) by a central stalk formed by the gamma and epsilon chains, while a peripheral stalk is formed by the delta and b chains.

The protein resides in the cell inner membrane. Key component of the proton channel; it plays a direct role in the translocation of protons across the membrane. This chain is ATP synthase subunit a, found in Granulibacter bethesdensis (strain ATCC BAA-1260 / CGDNIH1).